Reading from the N-terminus, the 102-residue chain is MKLLAMVALLVTICSLEGALVRRQAAETDVQTLFSQYLQSLTDYGKDLMEKAQPSEIQNQAKAYFQNAQERLTPFVQRTGTNLMDFLSRLMSPEEKPAPAAK.

A signal peptide spans 1 to 18 (MKLLAMVALLVTICSLEG). A Methionine sulfoxide modification is found at Met49.

The protein belongs to the apolipoprotein A2 family. Monomer. Interacts with NAXE and NDRG1. In terms of tissue distribution, plasma.

It localises to the secreted. May stabilize HDL (high density lipoprotein) structure by its association with lipids, and affect the HDL metabolism. This Rattus norvegicus (Rat) protein is Apolipoprotein A-II (Apoa2).